We begin with the raw amino-acid sequence, 776 residues long: Protein phosphatase 1 regulatory subunit 21 (776 aa).

Coiled coils occupy residues 4–206 (GDLQ…LKTL), 432–466 (RLHDISQELSKHYNNKAALEQELPAATDKLKTTND), and 555–597 (ESRE…KETL).

Component of the FERRY complex.

The protein localises to the early endosome. In terms of biological role, component of the FERRY complex (Five-subunit Endosomal Rab5 and RNA/ribosome intermediary). The FERRY complex directly interacts with mRNAs and RAB5A, and functions as a RAB5A effector involved in the localization and the distribution of specific mRNAs most likely by mediating their endosomal transport. The complex recruits mRNAs and ribosomes to early endosomes through direct mRNA-interaction. Putative regulator of protein phosphatase 1 (PP1) activity. May play a role in the endosomal sorting process or in endosome maturation pathway. This chain is Protein phosphatase 1 regulatory subunit 21 (ppp1r21), found in Xenopus laevis (African clawed frog).